Reading from the N-terminus, the 1711-residue chain is Serine/threonine-protein kinase MRCK beta (1711 aa).

One can recognise a Protein kinase domain in the interval 76-342 (FEIIKVIGRG…IEDFKKHAFF (267 aa)). ATP contacts are provided by residues 82-90 (IGRGAFGEV) and Lys-105. Asp-200 functions as the Proton acceptor in the catalytic mechanism. Phosphoserine; by autocatalysis occurs at positions 221 and 233. Position 239 is a phosphothreonine; by autocatalysis (Thr-239). Positions 343–413 (EGLNWENIRN…TTESCFSDRG (71 aa)) constitute an AGC-kinase C-terminal domain. Thr-423 is subject to Phosphothreonine. 2 coiled-coil regions span residues 431–815 (QRDL…AHWE) and 878–939 (ELQS…FRAD). A disordered region spans residues 461–484 (LQESTQTVQSLHGSSRALSNSNRD). The span at 463–481 (ESTQTVQSLHGSSRALSNS) shows a compositional bias: polar residues. Position 671 is an omega-N-methylarginine (Arg-671). The residue at position 954 (Tyr-954) is a Phosphotyrosine. Residues 969 to 1009 (SSASEQETQAPKPEASPSMSVAASEQQEDMARPPQRPSAVP) form a disordered region. The Phorbol-ester/DAG-type zinc-finger motif lies at 1025–1075 (AHQFSIKSFSSPTQCSHCTSLMVGLIRQGYACEVCSFACHVSCKDGAPQVC). Residues 1095-1214 (GTAYKGHVKV…WVGILEGLQS (120 aa)) form the PH domain. Residues 1240–1513 (IKAILTAAIV…RPLNSEGTLN (274 aa)) form the CNH domain. The 14-residue stretch at 1583–1596 (ISNPTNFNHVAHMG) folds into the CRIB domain. Residues 1611–1711 (AVPPSQEERP…EGLEQPACDT (101 aa)) form a disordered region. Polar residues predominate over residues 1641 to 1650 (WPSSGGSEPS). A compositionally biased stretch (basic and acidic residues) spans 1664 to 1675 (DFDKEPDSDSTK). Ser-1680, Ser-1682, Ser-1686, Ser-1690, and Ser-1693 each carry phosphoserine.

It belongs to the protein kinase superfamily. AGC Ser/Thr protein kinase family. DMPK subfamily. Homodimer and homotetramer via the coiled coil regions. Interacts tightly with GTP-bound but not GDP-bound CDC42. Interacts with TJP1, when in the presence of catalytically active CDC42. Forms a tripartite complex with MYO18A and LURAP1 with the latter acting as an adapter connecting CDC42BPB and MYO18A. LURAP1 binding results in activation of CDC42BPB by abolition of its negative autoregulation. Interacts with STRIP1, STRN3 and SIKE1. Interacts with CPNE4 (via VWFA domain). Interacts with LURAP1. Interacts (via AGC-kinase C-terminal domain) with FAM89B/LRAP25 (via LRR repeat). Forms a tripartite complex with FAM89B/LRAP25 and LIMK1. Requires Mg(2+) as cofactor. Proteolytically cleaved by caspases upon apoptosis induction. Expressed in all tissues examined, with high levels in heart, brain, placenta and lung.

The protein resides in the cytoplasm. Its subcellular location is the cell membrane. It is found in the cell junction. The protein localises to the cell projection. It localises to the lamellipodium. The catalysed reaction is L-seryl-[protein] + ATP = O-phospho-L-seryl-[protein] + ADP + H(+). It catalyses the reaction L-threonyl-[protein] + ATP = O-phospho-L-threonyl-[protein] + ADP + H(+). With respect to regulation, maintained in an inactive, closed conformation by an interaction between the kinase domain and the negative autoregulatory C-terminal coiled-coil region. Agonist binding to the phorbol ester binding site disrupts this, releasing the kinase domain to allow N-terminus-mediated dimerization and kinase activation by transautophosphorylation. Inhibited by chelerythrine chloride. In terms of biological role, serine/threonine-protein kinase which is an important downstream effector of CDC42 and plays a role in the regulation of cytoskeleton reorganization and cell migration. Regulates actin cytoskeletal reorganization via phosphorylation of PPP1R12C and MYL9/MLC2. In concert with MYO18A and LURAP1, is involved in modulating lamellar actomyosin retrograde flow that is crucial to cell protrusion and migration. Phosphorylates PPP1R12A. In concert with FAM89B/LRAP25 mediates the targeting of LIMK1 to the lamellipodium resulting in its activation and subsequent phosphorylation of CFL1 which is important for lamellipodial F-actin regulation. The chain is Serine/threonine-protein kinase MRCK beta from Homo sapiens (Human).